The primary structure comprises 98 residues: NADH-ubiquinone oxidoreductase chain 4L (98 aa).

3 helical membrane passes run 1–21 (MSLVHMNILLAFTMSLTGLLM), 29–49 (ALLCLEGMMLSLFILMTITIL), and 59–79 (TPIILLVFAACEAAVGLALLV).

This sequence belongs to the complex I subunit 4L family. Core subunit of respiratory chain NADH dehydrogenase (Complex I) which is composed of 45 different subunits.

The protein resides in the mitochondrion inner membrane. It catalyses the reaction a ubiquinone + NADH + 5 H(+)(in) = a ubiquinol + NAD(+) + 4 H(+)(out). Core subunit of the mitochondrial membrane respiratory chain NADH dehydrogenase (Complex I) which catalyzes electron transfer from NADH through the respiratory chain, using ubiquinone as an electron acceptor. Part of the enzyme membrane arm which is embedded in the lipid bilayer and involved in proton translocation. The protein is NADH-ubiquinone oxidoreductase chain 4L (MT-ND4L) of Lipotes vexillifer (Yangtze river dolphin).